A 155-amino-acid chain; its full sequence is 17.6 kDa class I heat shock protein 1 (155 aa).

Residues 39–154 enclose the sHSP domain; sequence SSSAIANARV…KAQVKSIDIS (116 aa).

This sequence belongs to the small heat shock protein (HSP20) family. Forms oligomeric structures. Binds to AKR2A.

It localises to the cytoplasm. Possesses chaperone activity. The polypeptide is 17.6 kDa class I heat shock protein 1 (HSP17.6A) (Arabidopsis thaliana (Mouse-ear cress)).